A 145-amino-acid polypeptide reads, in one-letter code: Cytochrome b (145 aa).

A helical membrane pass occupies residues 38–58 (FFALHFLLPFVLAALVIMHLI). Residues His-42 and His-56 each coordinate heme b. His-61 provides a ligand contact to a ubiquinone. Residues 85–105 (FVFKDLVTVFIFFIVLSVFVF) traverse the membrane as a helical segment.

It belongs to the cytochrome b family. In terms of assembly, fungal cytochrome b-c1 complex contains 10 subunits; 3 respiratory subunits, 2 core proteins and 5 low-molecular weight proteins. Cytochrome b-c1 complex is a homodimer. Requires heme b as cofactor.

Its subcellular location is the mitochondrion inner membrane. In terms of biological role, component of the ubiquinol-cytochrome c reductase complex (complex III or cytochrome b-c1 complex) that is part of the mitochondrial respiratory chain. The b-c1 complex mediates electron transfer from ubiquinol to cytochrome c. Contributes to the generation of a proton gradient across the mitochondrial membrane that is then used for ATP synthesis. The polypeptide is Cytochrome b (cob) (Aspergillus fumigatus (Neosartorya fumigata)).